The chain runs to 96 residues: Large ribosomal subunit protein eL14 (96 aa).

The protein belongs to the eukaryotic ribosomal protein eL14 family.

This is Large ribosomal subunit protein eL14 from Saccharolobus islandicus (strain Y.N.15.51 / Yellowstone #2) (Sulfolobus islandicus).